The following is a 123-amino-acid chain: UPF0738 protein BCE_1319 (123 aa).

It belongs to the UPF0738 family.

The polypeptide is UPF0738 protein BCE_1319 (Bacillus cereus (strain ATCC 10987 / NRS 248)).